A 426-amino-acid chain; its full sequence is Histidine--tRNA ligase (426 aa).

This sequence belongs to the class-II aminoacyl-tRNA synthetase family. As to quaternary structure, homodimer.

The protein resides in the cytoplasm. It carries out the reaction tRNA(His) + L-histidine + ATP = L-histidyl-tRNA(His) + AMP + diphosphate + H(+). In Streptococcus pyogenes serotype M3 (strain ATCC BAA-595 / MGAS315), this protein is Histidine--tRNA ligase.